Reading from the N-terminus, the 354-residue chain is Photosystem II D2 protein (354 aa).

N-acetylthreonine is present on T2. Residue T2 is modified to Phosphothreonine. Residues 42-62 form a helical membrane-spanning segment; sequence CAYFALGGFFTGNTFVTSWYT. H119 contacts chlorophyll a. A helical membrane pass occupies residues 126 to 142; that stretch reads GFMLRQFEIARAVKIRP. Positions 131 and 144 each coordinate pheophytin a. Residues 154–167 form a helical membrane-spanning segment; it reads VFVSVFLIYPLGQQ. Chlorophyll a is bound at residue H199. A helical transmembrane segment spans residues 209–229; that stretch reads AALLCAIHGATVENTLFEDGD. Residues H216 and F263 each contribute to the a plastoquinone site. Residue H216 coordinates Fe cation. Residue H270 coordinates Fe cation. A helical membrane pass occupies residues 280-296; sequence GLWMSAIGVVGLALNLR.

This sequence belongs to the reaction center PufL/M/PsbA/D family. As to quaternary structure, PSII is composed of 1 copy each of membrane proteins PsbA, PsbB, PsbC, PsbD, PsbE, PsbF, PsbH, PsbI, PsbJ, PsbK, PsbL, PsbM, PsbT, PsbX, PsbY, PsbZ, Psb30/Ycf12, at least 3 peripheral proteins of the oxygen-evolving complex and a large number of cofactors. It forms dimeric complexes. The D1/D2 heterodimer binds P680, chlorophylls that are the primary electron donor of PSII, and subsequent electron acceptors. It shares a non-heme iron and each subunit binds pheophytin, quinone, additional chlorophylls, carotenoids and lipids. There is also a Cl(-1) ion associated with D1 and D2, which is required for oxygen evolution. The PSII complex binds additional chlorophylls, carotenoids and specific lipids. serves as cofactor.

It is found in the plastid. It localises to the chloroplast thylakoid membrane. The catalysed reaction is 2 a plastoquinone + 4 hnu + 2 H2O = 2 a plastoquinol + O2. Its function is as follows. Photosystem II (PSII) is a light-driven water:plastoquinone oxidoreductase that uses light energy to abstract electrons from H(2)O, generating O(2) and a proton gradient subsequently used for ATP formation. It consists of a core antenna complex that captures photons, and an electron transfer chain that converts photonic excitation into a charge separation. The D1/D2 (PsbA/PsbD) reaction center heterodimer binds P680, the primary electron donor of PSII as well as several subsequent electron acceptors. D2 is needed for assembly of a stable PSII complex. The chain is Photosystem II D2 protein from Mesostigma viride (Green alga).